Here is a 1135-residue protein sequence, read N- to C-terminus: LRR receptor-like serine/threonine-protein kinase RGI2 (1135 aa).

The first 35 residues, 1 to 35 (MSLQMPIPRKKALTVSHFSITLSLFLAFFISSTSA), serve as a signal peptide directing secretion. At 36 to 723 (STNEVSALIS…QRGVHSHRLR (688 aa)) the chain is on the extracellular side. Cys69 and Cys76 form a disulfide bridge. 2 N-linked (GlcNAc...) asparagine glycosylation sites follow: Asn101 and Asn117. LRR repeat units lie at residues 105–129 (FTSL…IGDC), 130–153 (SELI…LGKL), 154–177 (KNLQ…LGDC), and 179–203 (SLKN…KIST). 4 consecutive short sequence motifs (small peptide recognition) follow at residues 186 to 187 (FD), 208 to 211 (RAGG), 231 to 236 (VLGLAA), and Tyr259. LRR repeat units follow at residues 226 to 250 (CRNL…LGQL), 251 to 274 (SKLQ…LGNC), 276 to 298 (ELIN…LGKL), 299 to 323 (QNLE…GFMK), 325 to 345 (LNAI…SFGN), 346 to 370 (LSNL…LSNC), 372 to 395 (KLVQ…GLLK), 397 to 418 (LNIF…LAGC), 419 to 442 (QNLQ…LFQL), 444 to 466 (NLTK…IGNC), 467 to 490 (TSLV…IGFL), 491 to 514 (QNLS…ISNC), 516 to 538 (QLQM…LSSL), 539 to 562 (TKLQ…LGHL), 564 to 586 (SLNR…LGHC), 587 to 610 (TNLQ…LFDI), 612 to 634 (DLDI…RISA), 635 to 658 (LNRL…LSGL), and 659 to 683 (ENLV…VFRQ). The N-linked (GlcNAc...) asparagine glycan is linked to Asn273. The short motif at 281-283 (FLY) is the Small peptide recognition element. A Small peptide recognition motif is present at residues 329 to 332 (DLSM). N-linked (GlcNAc...) asparagine glycosylation is present at Asn345. Positions 351–353 (ELM) match the Small peptide recognition motif. 2 N-linked (GlcNAc...) asparagine glycosylation sites follow: Asn358 and Asn369. Short sequence motifs (small peptide recognition) lie at residues 399-403 (IFLGW) and 425-428 (DLSQ). Asn444 is a glycosylation site (N-linked (GlcNAc...) asparagine). Positions 447–451 (KLLLI) match the Small peptide recognition motif. Asn465 is a glycosylation site (N-linked (GlcNAc...) asparagine). Residues 471 to 473 (RLR) carry the Small peptide recognition motif. N-linked (GlcNAc...) asparagine glycans are attached at residues Asn492, Asn502, Asn521, and Asn524. N-linked (GlcNAc...) asparagine glycosylation is found at Asn598 and Asn618. Residues Asn665 and Asn707 are each glycosylated (N-linked (GlcNAc...) asparagine). Residues 724–744 (IAIGLLISVTAVLAVLGVLAV) traverse the membrane as a helical segment. Residues 745 to 1135 (IRAKQMIRDD…ATSNVRPNLK (391 aa)) lie on the Cytoplasmic side of the membrane. Thr777 carries the post-translational modification Phosphothreonine. The Protein kinase domain occupies 785-1066 (LVEGNVIGKG…KDVAAMLSEI (282 aa)). Residues 791–799 (IGKGCSGIV) and Lys813 each bind ATP. 2 positions are modified to phosphotyrosine: Tyr868 and Tyr907. Asp920 (proton acceptor) is an active-site residue. 2 positions are modified to phosphotyrosine: Tyr963 and Tyr970. Residues 1077 to 1135 (DGCSGSCNNGRERGKDDSTSSVMQQTAKYLRSSSTSFSASSLLYSSSSSATSNVRPNLK) are disordered. Residues 1108–1128 (SSSTSFSASSLLYSSSSSATS) are compositionally biased toward low complexity.

The protein belongs to the protein kinase superfamily. Ser/Thr protein kinase family. As to quaternary structure, binds to RGF peptides such as RGF1, GLV5/CLEL1/RGF2, GLV7/CLEL3/RGF3, GLV3/RGF4, GLV10/CLEL7/RGF5 and RGF10/CLELN; these interactions trigger the formation of heterodimers with SERK1. Interacts with UBP13. Phosphorylated and ubiquitinated upon interaction with RGF1, thus leading to activation a subsequent degradation. Stabilized by UBP12 and UBP13-mediated deubiquitination. In terms of processing, autophosphorylated. As to expression, specific to root meristems, especially in lateral root meristems (LRM).

It localises to the membrane. The enzyme catalyses L-seryl-[protein] + ATP = O-phospho-L-seryl-[protein] + ADP + H(+). It carries out the reaction L-threonyl-[protein] + ATP = O-phospho-L-threonyl-[protein] + ADP + H(+). In terms of biological role, together with RGI1, RGI3, RGI4 and RGI5, acts as a receptor of RGF peptides (e.g. RGF1, GLV5/CLEL1/RGF2, GLV7/CLEL3/RGF3, GLV3/RGF4, GLV10/CLEL7/RGF5 and RGF10/CLELN), peptide hormones which maintain the postembryonic root stem cell niche by regulating the expression levels and patterns of the transcription factor PLETHORA (PLT, e.g. PLT1 and PLT2). Links RGF peptides signal with their downstream components. This is LRR receptor-like serine/threonine-protein kinase RGI2 from Arabidopsis thaliana (Mouse-ear cress).